The primary structure comprises 488 residues: MAAAATASTGTKGVVRQVIGPVLDVEFPAGKLPKILNALRIEGKNPAGQDVALTAEVQQLLGDHRVRAVAMSGTDGLVRGMEAIDTGSAISVPVGEATLGRIFNVLGEPVDEQGPVKTKTTSPIHREAPKLTDLETKPKVFETGIKVIDLLAPYRQGGKVGLFGGAGVGKTVLIQELINNIAKEHGGVSVFGGVGERTREGNDLYEEFKESGVINADDLTQSKVALCFGQMNEPPGARMRVGLSALTMAEHFRDVNKQDVLLFVDNIFRFVQAGSEVSALLGRMPSAVGYQPTLGTDVGELQERITSTLEGSITSIQAVYVPADDLTDPAPATTFAHLDATTVLARALAAKGIYPAVDPLDSTSTMLQPSVVGDEHYRTARAVQSTLQRYKELQDIIAILGLDELSEDDRRTVDRARKIEKFLSQPFFVAEIFTGMSGKYVKLEDTIAGFNMILSGELDDLPEQAFYLVGNITEVKEKAQKISADAKK.

164–171 (GGAGVGKT) contributes to the ATP binding site.

It belongs to the ATPase alpha/beta chains family. As to quaternary structure, F-type ATPases have 2 components, CF(1) - the catalytic core - and CF(0) - the membrane proton channel. CF(1) has five subunits: alpha(3), beta(3), gamma(1), delta(1), epsilon(1). CF(0) has four main subunits: a(1), b(1), b'(1) and c(9-12).

The protein resides in the cellular thylakoid membrane. It catalyses the reaction ATP + H2O + 4 H(+)(in) = ADP + phosphate + 5 H(+)(out). Produces ATP from ADP in the presence of a proton gradient across the membrane. The catalytic sites are hosted primarily by the beta subunits. The chain is ATP synthase subunit beta from Prochlorococcus marinus (strain SARG / CCMP1375 / SS120).